Reading from the N-terminus, the 345-residue chain is Ubiquitin-associated domain-containing protein 2 (345 aa).

The signal sequence occupies residues 1–35 (MFTSTGSSGLYKAPLSKSLLLVPSALSLLLALLLP). The Extracellular segment spans residues 36 to 91 (HCQKLFVYDLHAVKNDFQIWRLICGRIICLDLKDTFCSSLLIYNFRIFERRYGSRK). Residues 92-112 (FASFLLGSWVLSALFDFLLVE) form a helical membrane-spanning segment. At 113 to 125 (AMQYFFGITAASN) the chain is on the cytoplasmic side. The chain crosses the membrane as a helical span at residues 126–146 (LPSGFLAPVFALFVPFYCSIP). At 147 to 163 (RVQVAQILGPLSITNKT) the chain is on the extracellular side. N161 is a glycosylation site (N-linked (GlcNAc...) asparagine). The helical transmembrane segment at 164-184 (LIYILGLQLFTSGSYIWIVAI) threads the bilayer. Residues 185–345 (SGLMSGLCYN…NVATNFLLQH (161 aa)) lie on the Cytoplasmic side of the membrane. A UBA domain is found at 305-345 (EVSEEQVARLMEMGFSRGDALEALRASNNDLNVATNFLLQH).

Interacts with LMBR1L, FAF2, AMFR and VCP.

The protein localises to the endoplasmic reticulum membrane. In terms of biological role, restricts trafficking of FAF2 from the endoplasmic reticulum to lipid droplets. In association with LMBR1L and E3 ubiquitin-protein ligase AMFR, negatively regulates the canonical Wnt signaling pathway in the lymphocytes by promoting the ubiquitin-mediated degradation of CTNNB1 and Wnt receptors FZD6 and LRP6. The chain is Ubiquitin-associated domain-containing protein 2 (UBAC2) from Macaca fascicularis (Crab-eating macaque).